Reading from the N-terminus, the 529-residue chain is Potassium voltage-gated channel subfamily A member 6 (529 aa).

Residues 1–35 are disordered; it reads MRSEKSLTLAAPGEVRGPEGEQQDAGEFQEAEGGG. Residues 1–171 lie on the Cytoplasmic side of the membrane; the sequence is MRSEKSLTLA…LLFEYPESSG (171 aa). Ser-3 carries the phosphoserine modification. Over residues 21–30 the composition is skewed to acidic residues; it reads EQQDAGEFQE. Residues 172–193 form a helical membrane-spanning segment; sequence PARGIAIVSVLVILISIVIFCL. Topologically, residues 194 to 262 are extracellular; the sequence is ETLPQFRADG…TLGGSFFTDP (69 aa). The disordered stretch occupies residues 203–238; the sequence is GRGGSNEGSGTRLSPASRSHEEEDEDEDSYAFPGSI. Residues 210–219 are compositionally biased toward polar residues; the sequence is GSGTRLSPAS. The chain crosses the membrane as a helical span at residues 263-284; that stretch reads FFLVETLCIVWFTFELLVRFSA. Cys-285 carries the S-palmitoyl cysteine lipid modification. At 285–295 the chain is on the cytoplasmic side; the sequence is CPSKAAFFRNI. A helical transmembrane segment spans residues 296–316; sequence MNIIDLVAIFPYFITLGTELV. At 317-337 the chain is on the extracellular side; the sequence is QRHEQQSVSGGSGQNGQQAMS. Residues 338-358 traverse the membrane as a helical; Voltage-sensor segment; sequence LAILRVIRLVRVFRIFKLSRH. Residues 359-373 are Cytoplasmic-facing; the sequence is SKGLQILGKTLQASM. Residues 360 to 373 form an S4-S5 linker region; it reads KGLQILGKTLQASM. A helical transmembrane segment spans residues 374 to 395; the sequence is RELGLLIFFLFIGVILFSSAVY. The Extracellular segment spans residues 396 to 409; sequence FAEADDVDSLFPSI. Positions 410-421 form an intramembrane region, helical; the sequence is PDAFWWAVVTMT. The short motif at 422-427 is the Selectivity filter element; it reads TVGYGD. The stretch at 422-429 is an intramembrane region; it reads TVGYGDMY. The Extracellular segment spans residues 430 to 436; that stretch reads PMTVGGK. Residues 437–465 traverse the membrane as a helical segment; that stretch reads IVGSLCAIAGVLTIALPVPVIVSNFNYFY. Over 466-529 the chain is Cytoplasmic; the sequence is HRETEQEEQG…YAEKRMLTEV (64 aa). Positions 488–513 are disordered; that stretch reads DLKATDNGLGKPDFAEASRERRPSYL. The span at 500 to 510 shows a compositional bias: basic and acidic residues; the sequence is DFAEASRERRP. Ser-511 is modified (phosphoserine; by PKA). The PDZ-binding signature appears at 527 to 529; that stretch reads TEV.

The protein belongs to the potassium channel family. A (Shaker) (TC 1.A.1.2) subfamily. Kv1.6/KCNA6 sub-subfamily. Homotetramer and heterotetramer of potassium channel proteins. Interacts with KCNAB1 and KCNAB2.

It is found in the cell membrane. It carries out the reaction K(+)(in) = K(+)(out). Voltage-gated potassium channel that mediates transmembrane potassium transport in excitable membranes. Forms tetrameric potassium-selective channels through which potassium ions pass in accordance with their electrochemical gradient. The channel alternates between opened and closed conformations in response to the voltage difference across the membrane. Can form functional homotetrameric channels and heterotetrameric channels that contain variable proportions of KCNA1, KCNA2, KCNA4, KCNA6, and possibly other family members as well; channel properties depend on the type of alpha subunits that are part of the channel. Channel properties are modulated by cytoplasmic beta subunits that regulate the subcellular location of the alpha subunits and promote rapid inactivation. Homotetrameric channels display rapid activation and slow inactivation. The protein is Potassium voltage-gated channel subfamily A member 6 (Kcna6) of Mus musculus (Mouse).